The chain runs to 418 residues: Outer membrane protein assembly factor BamB (418 aa).

Positions 1-28 (MFHNTCGRKGRFARAMGMALAISVTLSG) are cleaved as a signal peptide. C29 carries the N-palmitoyl cysteine lipid modification. The S-diacylglycerol cysteine moiety is linked to residue C29.

This sequence belongs to the BamB family. Part of the Bam complex.

It is found in the cell outer membrane. Functionally, part of the outer membrane protein assembly complex, which is involved in assembly and insertion of beta-barrel proteins into the outer membrane. In Alteromonas naphthalenivorans, this protein is Outer membrane protein assembly factor BamB.